The sequence spans 485 residues: Cysteine--tRNA ligase (485 aa).

C29 lines the Zn(2+) pocket. Residues 31-41 (ATVQGMPHVGH) carry the 'HIGH' region motif. The disordered stretch occupies residues 174 to 198 (QRVEDMQDAPDADPRGKRDPHDFAL). Over residues 185–197 (ADPRGKRDPHDFA) the composition is skewed to basic and acidic residues. Residues C227, H252, and E256 each contribute to the Zn(2+) site. The short motif at 283-287 (KMSKS) is the 'KMSKS' region element. K286 is an ATP binding site.

It belongs to the class-I aminoacyl-tRNA synthetase family. In terms of assembly, monomer. The cofactor is Zn(2+).

It is found in the cytoplasm. It catalyses the reaction tRNA(Cys) + L-cysteine + ATP = L-cysteinyl-tRNA(Cys) + AMP + diphosphate. This Micrococcus luteus (strain ATCC 4698 / DSM 20030 / JCM 1464 / CCM 169 / CCUG 5858 / IAM 1056 / NBRC 3333 / NCIMB 9278 / NCTC 2665 / VKM Ac-2230) (Micrococcus lysodeikticus) protein is Cysteine--tRNA ligase.